We begin with the raw amino-acid sequence, 64 residues long: Prokaryotic ubiquitin-like protein Pup (64 aa).

A disordered region spans residues 1–35; sequence MAQGGQVSAGGGRRDDDEPIEQTSGAGTQQVNVTG. Over residues 21 to 33 the composition is skewed to polar residues; it reads EQTSGAGTQQVNV. Residues 21 to 58 form an ARC ATPase binding region; it reads EQTSGAGTQQVNVTGTDDLLDEIDGLLENNAEEFVRSY. Residue Gln-64 is modified to Deamidated glutamine. Residue Gln-64 forms an Isoglutamyl lysine isopeptide (Gln-Lys) (interchain with K-? in acceptor proteins) linkage.

The protein belongs to the prokaryotic ubiquitin-like protein family. Strongly interacts with the proteasome-associated ATPase ARC through a hydrophobic interface; the interacting region of Pup lies in its C-terminal half. There is one Pup binding site per ARC hexamer ring. Post-translationally, is modified by deamidation of its C-terminal glutamine to glutamate by the deamidase Dop, a prerequisite to the subsequent pupylation process.

The protein operates within protein degradation; proteasomal Pup-dependent pathway. Functionally, protein modifier that is covalently attached to lysine residues of substrate proteins, thereby targeting them for proteasomal degradation. The tagging system is termed pupylation. This Corynebacterium jeikeium (strain K411) protein is Prokaryotic ubiquitin-like protein Pup.